The chain runs to 335 residues: Holliday junction branch migration complex subunit RuvB (335 aa).

The large ATPase domain (RuvB-L) stretch occupies residues Met1–Tyr183. ATP contacts are provided by residues Leu22, Arg23, Gly64, Lys67, Thr68, Thr69, Glu130–Tyr132, Arg173, Tyr183, and Arg220. Thr68 is a Mg(2+) binding site. The tract at residues Thr184–Gln254 is small ATPAse domain (RuvB-S). Residues Pro257–Val335 form a head domain (RuvB-H) region. Arg293, Arg312, and Arg317 together coordinate DNA.

It belongs to the RuvB family. Homohexamer. Forms an RuvA(8)-RuvB(12)-Holliday junction (HJ) complex. HJ DNA is sandwiched between 2 RuvA tetramers; dsDNA enters through RuvA and exits via RuvB. An RuvB hexamer assembles on each DNA strand where it exits the tetramer. Each RuvB hexamer is contacted by two RuvA subunits (via domain III) on 2 adjacent RuvB subunits; this complex drives branch migration. In the full resolvosome a probable DNA-RuvA(4)-RuvB(12)-RuvC(2) complex forms which resolves the HJ.

Its subcellular location is the cytoplasm. The catalysed reaction is ATP + H2O = ADP + phosphate + H(+). Functionally, the RuvA-RuvB-RuvC complex processes Holliday junction (HJ) DNA during genetic recombination and DNA repair, while the RuvA-RuvB complex plays an important role in the rescue of blocked DNA replication forks via replication fork reversal (RFR). RuvA specifically binds to HJ cruciform DNA, conferring on it an open structure. The RuvB hexamer acts as an ATP-dependent pump, pulling dsDNA into and through the RuvAB complex. RuvB forms 2 homohexamers on either side of HJ DNA bound by 1 or 2 RuvA tetramers; 4 subunits per hexamer contact DNA at a time. Coordinated motions by a converter formed by DNA-disengaged RuvB subunits stimulates ATP hydrolysis and nucleotide exchange. Immobilization of the converter enables RuvB to convert the ATP-contained energy into a lever motion, pulling 2 nucleotides of DNA out of the RuvA tetramer per ATP hydrolyzed, thus driving DNA branch migration. The RuvB motors rotate together with the DNA substrate, which together with the progressing nucleotide cycle form the mechanistic basis for DNA recombination by continuous HJ branch migration. Branch migration allows RuvC to scan DNA until it finds its consensus sequence, where it cleaves and resolves cruciform DNA. This Listeria welshimeri serovar 6b (strain ATCC 35897 / DSM 20650 / CCUG 15529 / CIP 8149 / NCTC 11857 / SLCC 5334 / V8) protein is Holliday junction branch migration complex subunit RuvB.